The primary structure comprises 355 residues: UDP-N-acetylglucosamine--N-acetylmuramyl-(pentapeptide) pyrophosphoryl-undecaprenol N-acetylglucosamine transferase (355 aa).

UDP-N-acetyl-alpha-D-glucosamine is bound by residues 15-17 (TGG), asparagine 127, arginine 163, serine 191, isoleucine 244, 263-268 (ALTVSE), and glutamine 288.

This sequence belongs to the glycosyltransferase 28 family. MurG subfamily.

Its subcellular location is the cell inner membrane. The catalysed reaction is di-trans,octa-cis-undecaprenyl diphospho-N-acetyl-alpha-D-muramoyl-L-alanyl-D-glutamyl-meso-2,6-diaminopimeloyl-D-alanyl-D-alanine + UDP-N-acetyl-alpha-D-glucosamine = di-trans,octa-cis-undecaprenyl diphospho-[N-acetyl-alpha-D-glucosaminyl-(1-&gt;4)]-N-acetyl-alpha-D-muramoyl-L-alanyl-D-glutamyl-meso-2,6-diaminopimeloyl-D-alanyl-D-alanine + UDP + H(+). It functions in the pathway cell wall biogenesis; peptidoglycan biosynthesis. In terms of biological role, cell wall formation. Catalyzes the transfer of a GlcNAc subunit on undecaprenyl-pyrophosphoryl-MurNAc-pentapeptide (lipid intermediate I) to form undecaprenyl-pyrophosphoryl-MurNAc-(pentapeptide)GlcNAc (lipid intermediate II). In Escherichia coli O45:K1 (strain S88 / ExPEC), this protein is UDP-N-acetylglucosamine--N-acetylmuramyl-(pentapeptide) pyrophosphoryl-undecaprenol N-acetylglucosamine transferase.